The following is a 472-amino-acid chain: Carboxypeptidase Q (472 aa).

The signal sequence occupies residues 1 to 20 (MKFLLFMFVGVVHLLPLASG). A propeptide spanning residues 21–44 (KAIYGNGPSQRTFQEIKEEIAHYG) is cleaved from the precursor. Residues N52, N61, and N179 are each glycosylated (N-linked (GlcNAc...) asparagine). Zn(2+) is bound by residues H290 and D302. E336 acts as the Nucleophile in catalysis. Residue E337 participates in Zn(2+) binding. 2 N-linked (GlcNAc...) asparagine glycosylation sites follow: N353 and N356. D364 serves as a coordination point for Zn(2+). N396 is a glycosylation site (N-linked (GlcNAc...) asparagine). H434 provides a ligand contact to Zn(2+).

The protein belongs to the peptidase M28 family. In terms of assembly, homodimer. The monomeric form is inactive while the homodimer is active. N-glycosylated. The secreted form is modified by hybrid or complex type oligosaccharide chains.

It is found in the endoplasmic reticulum. Its subcellular location is the golgi apparatus. The protein resides in the lysosome. The protein localises to the secreted. Its function is as follows. Carboxypeptidase that may play an important role in the hydrolysis of circulating peptides. Catalyzes the hydrolysis of dipeptides with unsubstituted terminals into amino acids. May play a role in the liberation of thyroxine hormone from its thyroglobulin (Tg) precursor. In Bos taurus (Bovine), this protein is Carboxypeptidase Q (CPQ).